A 261-amino-acid chain; its full sequence is Na(+)-translocating NADH-quinone reductase subunit C (261 aa).

Residues 12–32 (LGVVVGLSLVCSIIVSTAAVG) form a helical membrane-spanning segment. Position 229 is an FMN phosphoryl threonine (threonine 229).

As to quaternary structure, composed of six subunits; NqrA, NqrB, NqrC, NqrD, NqrE and NqrF. The cofactor is FMN.

The protein resides in the cell inner membrane. It catalyses the reaction a ubiquinone + n Na(+)(in) + NADH + H(+) = a ubiquinol + n Na(+)(out) + NAD(+). Its function is as follows. NQR complex catalyzes the reduction of ubiquinone-1 to ubiquinol by two successive reactions, coupled with the transport of Na(+) ions from the cytoplasm to the periplasm. NqrA to NqrE are probably involved in the second step, the conversion of ubisemiquinone to ubiquinol. This Vibrio campbellii (strain ATCC BAA-1116) protein is Na(+)-translocating NADH-quinone reductase subunit C.